A 468-amino-acid polypeptide reads, in one-letter code: 3-isopropylmalate dehydratase large subunit (468 aa).

[4Fe-4S] cluster is bound by residues Cys349, Cys409, and Cys412.

The protein belongs to the aconitase/IPM isomerase family. LeuC type 1 subfamily. In terms of assembly, heterodimer of LeuC and LeuD. The cofactor is [4Fe-4S] cluster.

The enzyme catalyses (2R,3S)-3-isopropylmalate = (2S)-2-isopropylmalate. It participates in amino-acid biosynthesis; L-leucine biosynthesis; L-leucine from 3-methyl-2-oxobutanoate: step 2/4. Catalyzes the isomerization between 2-isopropylmalate and 3-isopropylmalate, via the formation of 2-isopropylmaleate. The sequence is that of 3-isopropylmalate dehydratase large subunit from Jannaschia sp. (strain CCS1).